Here is a 348-residue protein sequence, read N- to C-terminus: Olfactory receptor 2T4 (348 aa).

The Extracellular portion of the chain corresponds to 1–57 (MDNITWMASHTGWSDFILMGLFRQSKHPMANITWMANHTGWSDFILLGLFRQSKHPA). 2 N-linked (GlcNAc...) asparagine glycosylation sites follow: Asn-31 and Asn-37. The chain crosses the membrane as a helical span at residues 58–81 (LLCVVIFVVFLMALSGNAVLILLI). Over 82 to 89 (HCDAHLHT) the chain is Cytoplasmic. Residues 90–111 (PMYFFISQLSLMDMAYISVTVP) traverse the membrane as a helical segment. The Extracellular portion of the chain corresponds to 112–132 (KMLLDQVMGVNKISAPECGMQ). The cysteines at positions 129 and 221 are disulfide-linked. The chain crosses the membrane as a helical span at residues 133 to 152 (MFFYVTLAGSEFFLLATMAY). Residues 153–171 (DRYVAICHPLRYPVLMNHR) are Cytoplasmic-facing. The chain crosses the membrane as a helical span at residues 172 to 190 (VCLFLSSGCWFLGSVDGFT). Topologically, residues 191–227 (FTPITMTFPFRGSREIHHFFCEVPAVLNLSCSDTSLY) are extracellular. Asn-218 carries an N-linked (GlcNAc...) asparagine glycan. A helical transmembrane segment spans residues 228–251 (EIFMYLCCVLMLLIPVVIISSSYL). Topologically, residues 252 to 268 (LILLTIHGMNSAEGRKK) are cytoplasmic. The helical transmembrane segment at 269-291 (AFATCSSHLTVVILFYGAAIYTY) threads the bilayer. Residues 292–304 (MLPSSYHTPEKDM) lie on the Extracellular side of the membrane. Residues 305 to 324 (MVSVFYTILTPVVNPLIYSL) form a helical membrane-spanning segment. Residues 325-348 (RNKDVMGALKKMLTVEPAFQKAME) are Cytoplasmic-facing.

It belongs to the G-protein coupled receptor 1 family.

It is found in the cell membrane. Odorant receptor. The chain is Olfactory receptor 2T4 (OR2T4) from Homo sapiens (Human).